Here is a 162-residue protein sequence, read N- to C-terminus: Peptide methionine sulfoxide reductase MsrA (162 aa).

Cys-16 is an active-site residue.

The protein belongs to the MsrA Met sulfoxide reductase family.

The catalysed reaction is L-methionyl-[protein] + [thioredoxin]-disulfide + H2O = L-methionyl-(S)-S-oxide-[protein] + [thioredoxin]-dithiol. It carries out the reaction [thioredoxin]-disulfide + L-methionine + H2O = L-methionine (S)-S-oxide + [thioredoxin]-dithiol. Has an important function as a repair enzyme for proteins that have been inactivated by oxidation. Catalyzes the reversible oxidation-reduction of methionine sulfoxide in proteins to methionine. In Geobacter metallireducens (strain ATCC 53774 / DSM 7210 / GS-15), this protein is Peptide methionine sulfoxide reductase MsrA.